We begin with the raw amino-acid sequence, 923 residues long: Glucosidase 2 subunit alpha (923 aa).

Positions 1 to 25 are cleaved as a signal peptide; sequence MRYHGICWFIFQAAIIFAIFGSCQG. An N-linked (GlcNAc...) asparagine glycan is attached at Asn262. Asp524 acts as the Nucleophile in catalysis. Residue Glu527 is part of the active site. N-linked (GlcNAc...) asparagine glycosylation is present at Asn563. Asp600 serves as the catalytic Proton donor. N-linked (GlcNAc...) asparagine glycosylation is present at Asn822.

This sequence belongs to the glycosyl hydrolase 31 family. Heterodimer of a catalytic subunit alpha (gls2) and a subunit beta (gtb1).

The protein resides in the endoplasmic reticulum. The catalysed reaction is N(4)-(alpha-D-Glc-(1-&gt;3)-alpha-D-Man-(1-&gt;2)-alpha-D-Man-(1-&gt;2)-alpha-D-Man-(1-&gt;3)-[alpha-D-Man-(1-&gt;2)-alpha-D-Man-(1-&gt;3)-[alpha-D-Man-(1-&gt;2)-alpha-D-Man-(1-&gt;6)]-alpha-D-Man-(1-&gt;6)]-beta-D-Man-(1-&gt;4)-beta-D-GlcNAc-(1-&gt;4)-beta-D-GlcNAc)-L-asparaginyl-[protein] + H2O = N(4)-(alpha-D-Man-(1-&gt;2)-alpha-D-Man-(1-&gt;2)-alpha-D-Man-(1-&gt;3)-[alpha-D-Man-(1-&gt;2)-alpha-D-Man-(1-&gt;3)-[alpha-D-Man-(1-&gt;2)-alpha-D-Man-(1-&gt;6)]-alpha-D-Man-(1-&gt;6)]-beta-D-Man-(1-&gt;4)-beta-D-GlcNAc-(1-&gt;4)-beta-D-GlcNAc)-L-asparaginyl-[protein] (N-glucan mannose isomer 9A1,2,3B1,2,3) + beta-D-glucose. It carries out the reaction N(4)-(alpha-D-Glc-(1-&gt;3)-alpha-D-Glc-(1-&gt;3)-alpha-D-Man-(1-&gt;2)-alpha-D-Man-(1-&gt;2)-alpha-D-Man-(1-&gt;3)-[alpha-D-Man-(1-&gt;2)-alpha-D-Man-(1-&gt;3)-[alpha-D-Man-(1-&gt;2)-alpha-D-Man-(1-&gt;6)]-alpha-D-Man-(1-&gt;6)]-beta-D-Man-(1-&gt;4)-beta-D-GlcNAc-(1-&gt;4)-beta-D-GlcNAc)-L-asparaginyl-[protein] + H2O = N(4)-(alpha-D-Glc-(1-&gt;3)-alpha-D-Man-(1-&gt;2)-alpha-D-Man-(1-&gt;2)-alpha-D-Man-(1-&gt;3)-[alpha-D-Man-(1-&gt;2)-alpha-D-Man-(1-&gt;3)-[alpha-D-Man-(1-&gt;2)-alpha-D-Man-(1-&gt;6)]-alpha-D-Man-(1-&gt;6)]-beta-D-Man-(1-&gt;4)-beta-D-GlcNAc-(1-&gt;4)-beta-D-GlcNAc)-L-asparaginyl-[protein] + beta-D-glucose. It participates in glycan metabolism; N-glycan metabolism. Catalytic subunit of glucosidase 2, which cleaves sequentially the 2 innermost alpha-1,3-linked glucose residues from the Glc(2)Man(9)GlcNAc(2) oligosaccharide precursor of immature glycoproteins. This chain is Glucosidase 2 subunit alpha, found in Schizosaccharomyces pombe (strain 972 / ATCC 24843) (Fission yeast).